We begin with the raw amino-acid sequence, 140 residues long: Large ribosomal subunit protein bL17 (140 aa).

This sequence belongs to the bacterial ribosomal protein bL17 family. In terms of assembly, part of the 50S ribosomal subunit. Contacts protein L32.

The chain is Large ribosomal subunit protein bL17 from Rhizobium etli (strain CIAT 652).